A 282-amino-acid chain; its full sequence is Small ribosomal subunit protein uS2 (282 aa).

The disordered stretch occupies residues 245 to 265; the sequence is AEEAVEELPLPTGEAQDEASS.

This sequence belongs to the universal ribosomal protein uS2 family.

In Chlamydia trachomatis serovar A (strain ATCC VR-571B / DSM 19440 / HAR-13), this protein is Small ribosomal subunit protein uS2.